Reading from the N-terminus, the 710-residue chain is Prolyl endopeptidase (710 aa).

N-acetylmethionine is present on Met-1. Lys-157 bears the N6-acetyllysine mark. Residues Ser-554, Asp-641, and His-680 each act as charge relay system in the active site.

It belongs to the peptidase S9A family. Monomer. In terms of processing, the N-terminus is blocked.

The protein localises to the cytoplasm. The enzyme catalyses Hydrolysis of Pro-|-Xaa &gt;&gt; Ala-|-Xaa in oligopeptides.. Its function is as follows. Cleaves peptide bonds on the C-terminal side of prolyl residues within peptides that are up to approximately 30 amino acids long. In Homo sapiens (Human), this protein is Prolyl endopeptidase (PREP).